The sequence spans 211 residues: HTH-type transcriptional repressor FabR (211 aa).

In terms of domain architecture, HTH tetR-type spans 10 to 70 (RTRRSLVEAA…TMVDESGLML (61 aa)). A DNA-binding region (H-T-H motif) is located at residues 33 to 52 (SLREVAREAGIAPTSFYRHF).

Homodimer.

It is found in the cytoplasm. Represses the transcription of fabB, involved in unsaturated fatty acid (UFA) biosynthesis. By controlling UFA production, FabR directly influences the physical properties of the membrane bilayer. In Cronobacter sakazakii (strain ATCC BAA-894) (Enterobacter sakazakii), this protein is HTH-type transcriptional repressor FabR.